Here is a 394-residue protein sequence, read N- to C-terminus: Phosphopentomutase (394 aa).

Mn(2+)-binding residues include D14, D287, H292, D328, H329, and H340.

It belongs to the phosphopentomutase family. Mn(2+) is required as a cofactor.

The protein resides in the cytoplasm. It carries out the reaction 2-deoxy-alpha-D-ribose 1-phosphate = 2-deoxy-D-ribose 5-phosphate. The enzyme catalyses alpha-D-ribose 1-phosphate = D-ribose 5-phosphate. It participates in carbohydrate degradation; 2-deoxy-D-ribose 1-phosphate degradation; D-glyceraldehyde 3-phosphate and acetaldehyde from 2-deoxy-alpha-D-ribose 1-phosphate: step 1/2. Its function is as follows. Isomerase that catalyzes the conversion of deoxy-ribose 1-phosphate (dRib-1-P) and ribose 1-phosphate (Rib-1-P) to deoxy-ribose 5-phosphate (dRib-5-P) and ribose 5-phosphate (Rib-5-P), respectively. The sequence is that of Phosphopentomutase from Listeria welshimeri serovar 6b (strain ATCC 35897 / DSM 20650 / CCUG 15529 / CIP 8149 / NCTC 11857 / SLCC 5334 / V8).